A 199-amino-acid chain; its full sequence is Biogenesis of lysosome-related organelles complex 1 subunit 3 (199 aa).

Positions 1-11 (MASQSRRRRPL) are enriched in basic residues. The disordered stretch occupies residues 1–81 (MASQSRRRRP…AAPRDLPPLV (81 aa)). Acidic residues predominate over residues 23–38 (AETDSELSASSEEEEL). Residues 39–54 (YLGPSGPTRGRPTGLR) show a composition bias toward low complexity. Thr62 is subject to Phosphothreonine. Phosphoserine is present on Ser64.

Belongs to the BLOC1S3 family. As to quaternary structure, component of the biogenesis of lysosome-related organelles complex 1 (BLOC-1) composed of BLOC1S1, BLOC1S2, BLOC1S3, BLOC1S4, BLOC1S5, BLOC1S6, DTNBP1/BLOC1S7 and SNAPIN/BLOC1S8. Octamer composed of one copy each BLOC1S1, BLOC1S2, BLOC1S3, BLOC1S4, BLOC1S5, BLOC1S6, DTNBP1/BLOC1S7 and SNAPIN/BLOC1S8. The BLOC-1 complex associates with the AP-3 protein complex and membrane protein cargos. Interacts directly with BLOC1S2. Interacts with BLOC1S4, BLOC1S5 and BLOC1S6. Phosphorylated.

The protein localises to the cytoplasm. Its function is as follows. Component of the BLOC-1 complex, a complex that is required for normal biogenesis of lysosome-related organelles (LRO), such as platelet dense granules and melanosomes. In concert with the AP-3 complex, the BLOC-1 complex is required to target membrane protein cargos into vesicles assembled at cell bodies for delivery into neurites and nerve terminals. The BLOC-1 complex, in association with SNARE proteins, is also proposed to be involved in neurite extension. Plays a role in intracellular vesicle trafficking. This Sus scrofa (Pig) protein is Biogenesis of lysosome-related organelles complex 1 subunit 3 (BLOC1S3).